Consider the following 98-residue polypeptide: uncharacterized protein (98 aa).

A disordered region spans residues 58 to 98 (ARFPVEDTAGGLLRTGGHRPQISDEEVSKRHHEQSHGQEDH).

This is an uncharacterized protein from Saccharomyces cerevisiae (strain ATCC 204508 / S288c) (Baker's yeast).